The following is a 149-amino-acid chain: Large ribosomal subunit protein bL9 (149 aa).

The protein belongs to the bacterial ribosomal protein bL9 family.

Binds to the 23S rRNA. This is Large ribosomal subunit protein bL9 from Thermotoga petrophila (strain ATCC BAA-488 / DSM 13995 / JCM 10881 / RKU-1).